We begin with the raw amino-acid sequence, 99 residues long: Putative GIY-YIG domain-containing protein 242L (99 aa).

The region spanning 5-81 (NGWNIYMVTM…KKQTKKVKLQ (77 aa)) is the GIY-YIG domain.

This Invertebrate iridescent virus 6 (IIV-6) protein is Putative GIY-YIG domain-containing protein 242L.